Here is a 368-residue protein sequence, read N- to C-terminus: Hydrophobic dipeptide epimerase (368 aa).

Residues T143 and 168–170 (KIK) contribute to the substrate site. D197, E225, and D253 together coordinate Mg(2+). Substrate-binding positions include K277 and 329–331 (DMD).

Belongs to the mandelate racemase/muconate lactonizing enzyme family. Mg(2+) serves as cofactor.

Functionally, catalyzes the epimerization of various hydrophobic dipeptides, such as L-Ala-L-Phe. Has epimerase activity with L-Ala-L-Thr, L-Ala-L-Met, L-Ala-L-Tyr, as well as L-Phe-L-Met, L-Phe-L-Ser and L-Phe-L-Thr (in vitro). This is Hydrophobic dipeptide epimerase from Citrifermentans bemidjiense (strain ATCC BAA-1014 / DSM 16622 / JCM 12645 / Bem) (Geobacter bemidjiensis).